The primary structure comprises 94 residues: Co-chaperonin GroES (94 aa).

The protein belongs to the GroES chaperonin family. In terms of assembly, heptamer of 7 subunits arranged in a ring. Interacts with the chaperonin GroEL.

It is found in the cytoplasm. Its function is as follows. Together with the chaperonin GroEL, plays an essential role in assisting protein folding. The GroEL-GroES system forms a nano-cage that allows encapsulation of the non-native substrate proteins and provides a physical environment optimized to promote and accelerate protein folding. GroES binds to the apical surface of the GroEL ring, thereby capping the opening of the GroEL channel. In Bacillus cereus (strain ZK / E33L), this protein is Co-chaperonin GroES.